Consider the following 192-residue polypeptide: Imidazoleglycerol-phosphate dehydratase (192 aa).

It belongs to the imidazoleglycerol-phosphate dehydratase family.

The protein resides in the cytoplasm. The enzyme catalyses D-erythro-1-(imidazol-4-yl)glycerol 3-phosphate = 3-(imidazol-4-yl)-2-oxopropyl phosphate + H2O. The protein operates within amino-acid biosynthesis; L-histidine biosynthesis; L-histidine from 5-phospho-alpha-D-ribose 1-diphosphate: step 6/9. The polypeptide is Imidazoleglycerol-phosphate dehydratase (Carboxydothermus hydrogenoformans (strain ATCC BAA-161 / DSM 6008 / Z-2901)).